Here is a 459-residue protein sequence, read N- to C-terminus: Nucleobindin-1 (459 aa).

Residues 1 to 25 form the signal peptide; it reads MPTSVPRGAPFLLLPPLLMLSAVLA. Serine 85 is subject to Phosphoserine. Phosphothreonine is present on threonine 147. The stretch at 149 to 217 forms a coiled coil; sequence EARDLELLIQ…QQRRHREHPK (69 aa). Residues 171–217 mediate DNA binding; sequence HHEEFKRYEMLKEHERRRYLESLGEEQRKEAERKLQEQQRRHREHPK. Residues 192–209 are compositionally biased toward basic and acidic residues; it reads SLGEEQRKEAERKLQEQQ. Residues 192 to 220 are disordered; sequence SLGEEQRKEAERKLQEQQRRHREHPKVNV. The tract at residues 227-320 is binds to GNAI2 and GNAI3; the sequence is LKEVWEELDG…VTLEEFLAST (94 aa). 2 EF-hand domains span residues 239–274 and 291–326; these read PNRFNPKTFFILHDINSDGVLDEQELEALFTKELEK and ERLRMREHVMKNVDTNQDRLVTLEEFLASTQRKEFG. Ca(2+) contacts are provided by aspartate 252, asparagine 254, aspartate 256, glutamate 263, aspartate 304, asparagine 306, aspartate 308, and glutamate 315. Residues 302–332 carry the GBA motif; sequence NVDTNQDRLVTLEEFLASTQRKEFGETAEGW. Residues 340–407 adopt a coiled-coil conformation; sequence AYTEEELKRF…RKQQQQEQSA (68 aa). Position 368 is a phosphoserine (serine 368). A disordered region spans residues 393-459; that stretch reads LQMEQRKQQQ…VLPQLDSQHL (67 aa). Residues 433–445 show a composition bias toward basic and acidic residues; the sequence is DQKDVPASEKKVP. Serine 456 is modified (phosphoserine).

The protein belongs to the nucleobindin family. As to quaternary structure, interacts (via GBA motif) with guanine nucleotide-binding protein G(i) alpha subunits GNAI1, GNAI2 and GNAI3 with higher affinity for GNAI1 and GNAI3 than for GNAI2. Preferentially interacts with inactive rather than active GNAI3. Interaction with GNAI3 is inhibited when NUCB1 binds calcium, probably due to a conformational change which renders the GBA motif inaccessible. In terms of tissue distribution, minor constituent of the mineralized matrix of bone. Detected in calvaria, rib cartilage, liver, kidney, spleen, brain, lung, skeletal and heart muscle with highest expression in calvaria and approximately half the amount in kidney, liver and brain.

The protein localises to the golgi apparatus. The protein resides in the cis-Golgi network membrane. It localises to the cytoplasm. It is found in the secreted. Functionally, major calcium-binding protein of the Golgi which may have a role in calcium homeostasis. Acts as a non-receptor guanine nucleotide exchange factor which binds to and activates alpha subunits of guanine nucleotide-binding proteins (G proteins). The sequence is that of Nucleobindin-1 (Nucb1) from Rattus norvegicus (Rat).